A 1412-amino-acid chain; its full sequence is DNA-directed RNA polymerase subunit beta' (1412 aa).

The Mg(2+) site is built by D543, D545, and D547. Zn(2+)-binding residues include C1017, C1092, C1099, and C1102.

Belongs to the RNA polymerase beta' chain family. In terms of assembly, the RNAP catalytic core consists of 2 alpha, 1 beta, 1 beta' and 1 omega subunit. When a sigma factor is associated with the core the holoenzyme is formed, which can initiate transcription. Requires Mg(2+) as cofactor. The cofactor is Zn(2+).

It catalyses the reaction RNA(n) + a ribonucleoside 5'-triphosphate = RNA(n+1) + diphosphate. Functionally, DNA-dependent RNA polymerase catalyzes the transcription of DNA into RNA using the four ribonucleoside triphosphates as substrates. The sequence is that of DNA-directed RNA polymerase subunit beta' from Mesomycoplasma hyopneumoniae (strain 232) (Mycoplasma hyopneumoniae).